The primary structure comprises 520 residues: GMP synthase [glutamine-hydrolyzing] (520 aa).

The region spanning 8–202 (RLLIIDFGSQ…FVRLAGFTGD (195 aa)) is the Glutamine amidotransferase type-1 domain. The Nucleophile role is filled by C86. Residues H177 and E179 contribute to the active site. Residues 203-395 (WTMDAYREQA…LGLPASFIGR (193 aa)) form the GMPS ATP-PPase domain. 230–236 (SGGVDSS) contributes to the ATP binding site.

As to quaternary structure, homodimer.

It catalyses the reaction XMP + L-glutamine + ATP + H2O = GMP + L-glutamate + AMP + diphosphate + 2 H(+). Its pathway is purine metabolism; GMP biosynthesis; GMP from XMP (L-Gln route): step 1/1. Functionally, catalyzes the synthesis of GMP from XMP. In Dinoroseobacter shibae (strain DSM 16493 / NCIMB 14021 / DFL 12), this protein is GMP synthase [glutamine-hydrolyzing].